The primary structure comprises 379 residues: Alanine racemase (379 aa).

Residue lysine 40 is the Proton acceptor; specific for D-alanine of the active site. Lysine 40 bears the N6-(pyridoxal phosphate)lysine mark. Residue arginine 138 coordinates substrate. Residue tyrosine 267 is the Proton acceptor; specific for L-alanine of the active site. Position 315 (methionine 315) interacts with substrate.

It belongs to the alanine racemase family. Pyridoxal 5'-phosphate is required as a cofactor.

It catalyses the reaction L-alanine = D-alanine. The protein operates within amino-acid biosynthesis; D-alanine biosynthesis; D-alanine from L-alanine: step 1/1. Its function is as follows. Catalyzes the interconversion of L-alanine and D-alanine. May also act on other amino acids. The protein is Alanine racemase (alr) of Halothermothrix orenii (strain H 168 / OCM 544 / DSM 9562).